We begin with the raw amino-acid sequence, 224 residues long: Putative ribonuclease Z (224 aa).

Asp120 and His184 together coordinate Zn(2+).

Belongs to the RNase Z family. Homodimer. The cofactor is Zn(2+).

The catalysed reaction is Endonucleolytic cleavage of RNA, removing extra 3' nucleotides from tRNA precursor, generating 3' termini of tRNAs. A 3'-hydroxy group is left at the tRNA terminus and a 5'-phosphoryl group is left at the trailer molecule.. Its function is as follows. Zinc phosphodiesterase, which displays some tRNA 3'-processing endonuclease activity. Probably involved in tRNA maturation, by removing a 3'-trailer from precursor tRNA. The chain is Putative ribonuclease Z (rnz) from Mycobacterium tuberculosis (strain CDC 1551 / Oshkosh).